A 319-amino-acid polypeptide reads, in one-letter code: MSLNFLDFEQPIAELEAKIDSLNALSRQDEKLDINIDEEVQRLREKSVELTRKIFADLGAWQIAQLARHPRRPYTLDYIQHIFTDFDELAGDRAYADDKAIVGGMARLDGRPVMVIGHQKGRETKEKIRRNFGMPAPEGYRKALRLMEMAERFNLPIVTFIDTPGAYPGVGAEERGQSEAIARNLREMSGLKVPVICTVIGEGGSGGALAIGVGDKVNMLQYSTYSVISPEGCASILWKSADKAPLAAEAMGITAPRLQELKLIDSVIPEPLGGAHRDPQAVAASLKTQLLADLEDLDTLEKEELLDRRYQRLMNYGYC.

Residues 35–296 form the CoA carboxyltransferase C-terminal domain; sequence NIDEEVQRLR…KTQLLADLED (262 aa).

It belongs to the AccA family. In terms of assembly, acetyl-CoA carboxylase is a heterohexamer composed of biotin carboxyl carrier protein (AccB), biotin carboxylase (AccC) and two subunits each of ACCase subunit alpha (AccA) and ACCase subunit beta (AccD).

The protein localises to the cytoplasm. It catalyses the reaction N(6)-carboxybiotinyl-L-lysyl-[protein] + acetyl-CoA = N(6)-biotinyl-L-lysyl-[protein] + malonyl-CoA. It participates in lipid metabolism; malonyl-CoA biosynthesis; malonyl-CoA from acetyl-CoA: step 1/1. Functionally, component of the acetyl coenzyme A carboxylase (ACC) complex. First, biotin carboxylase catalyzes the carboxylation of biotin on its carrier protein (BCCP) and then the CO(2) group is transferred by the carboxyltransferase to acetyl-CoA to form malonyl-CoA. This chain is Acetyl-coenzyme A carboxylase carboxyl transferase subunit alpha, found in Edwardsiella ictaluri (strain 93-146).